The chain runs to 1088 residues: RNA-directed RNA polymerase (1088 aa).

In terms of domain architecture, RdRp catalytic spans 501 to 687 (LSYGDVTRFL…AKRYIAGGKI (187 aa)).

The protein belongs to the reoviridae RNA-directed RNA polymerase family. In terms of assembly, interacts with VP3 (Potential). Interacts with VP2; this interaction activates VP1. Interacts with NSP5; this interaction is probably necessary for the formation of functional virus factories. Interacts with NSP2; this interaction is weak. The cofactor is Mg(2+).

The protein localises to the virion. The catalysed reaction is RNA(n) + a ribonucleoside 5'-triphosphate = RNA(n+1) + diphosphate. In terms of biological role, RNA-directed RNA polymerase that is involved in both transcription and genome replication. Together with VP3 capping enzyme, forms an enzyme complex positioned near the channels situated at each of the five-fold vertices of the core. Following infection, the outermost layer of the virus is lost, leaving a double-layered particle (DLP) made up of the core and VP6 shell. VP1 then catalyzes the transcription of fully conservative plus-strand genomic RNAs that are extruded through the DLP's channels into the cytoplasm where they function as mRNAs for translation of viral proteins. One copy of each of the viral (+)RNAs is also recruited during core assembly, together with newly synthesized polymerase complexes and VP2. The polymerase of these novo-formed particles catalyzes the synthesis of complementary minus-strands leading to dsRNA formation. To do so, the polymerase specifically recognizes and binds 4 bases 5'-UGUG-3' in the conserved 3'-sequence of plus-strand RNA templates. VP2 presumably activates the autoinhibited VP1-RNA complex to coordinate packaging and genome replication. Once dsRNA synthesis is complete, the polymerase switches to the transcriptional mode, thus providing secondary transcription. This Rotavirus A (strain RVA/Human/United States/Wa/1974/G1P1A[8]) (RV-A) protein is RNA-directed RNA polymerase.